Consider the following 448-residue polypeptide: Cysteine--tRNA ligase (448 aa).

Cys27 contributes to the Zn(2+) binding site. A 'HIGH' region motif is present at residues 29–39; it reads PTVYNYIHVGN. Zn(2+)-binding residues include Cys210, His235, and Glu239. The short motif at 267-271 is the 'KMSKS' region element; the sequence is KMSKS. Lys270 lines the ATP pocket.

The protein belongs to the class-I aminoacyl-tRNA synthetase family. In terms of assembly, monomer. The cofactor is Zn(2+).

The protein resides in the cytoplasm. It catalyses the reaction tRNA(Cys) + L-cysteine + ATP = L-cysteinyl-tRNA(Cys) + AMP + diphosphate. The protein is Cysteine--tRNA ligase of Lactococcus lactis subsp. lactis (strain IL1403) (Streptococcus lactis).